The primary structure comprises 212 residues: MAIGLIGRKVGMTRIFTEDGVSIPVTVIEVAGNRVTQVKTLETDGYRALQVTTGTKKANRITKPEAGHFAKSGVEAGRGLWELRLADGEGEGIEVGAELNVGIFADVAKVDVTGQSKGKGFQGGVKRWNFRTQDMTHGNSLSHRSNGSIGQNQTPGRVFKGKKMSGHMGAERVTTQNLDVVRVDVERNLLLVKGAVPGATNGDLIIKPAVKA.

The tract at residues 136–155 is disordered; the sequence is THGNSLSHRSNGSIGQNQTP. N5-methylglutamine is present on Gln-153.

This sequence belongs to the universal ribosomal protein uL3 family. Part of the 50S ribosomal subunit. Forms a cluster with proteins L14 and L19. In terms of processing, methylated by PrmB.

One of the primary rRNA binding proteins, it binds directly near the 3'-end of the 23S rRNA, where it nucleates assembly of the 50S subunit. This chain is Large ribosomal subunit protein uL3, found in Shewanella oneidensis (strain ATCC 700550 / JCM 31522 / CIP 106686 / LMG 19005 / NCIMB 14063 / MR-1).